Consider the following 247-residue polypeptide: Probable 2-phosphosulfolactate phosphatase (247 aa).

It belongs to the ComB family. The cofactor is Mg(2+).

It catalyses the reaction (2R)-O-phospho-3-sulfolactate + H2O = (2R)-3-sulfolactate + phosphate. The polypeptide is Probable 2-phosphosulfolactate phosphatase (Clostridium perfringens (strain 13 / Type A)).